A 347-amino-acid chain; its full sequence is Phosphate acyltransferase (347 aa).

The protein belongs to the PlsX family. Homodimer. Probably interacts with PlsY.

The protein resides in the cytoplasm. The catalysed reaction is a fatty acyl-[ACP] + phosphate = an acyl phosphate + holo-[ACP]. It functions in the pathway lipid metabolism; phospholipid metabolism. Catalyzes the reversible formation of acyl-phosphate (acyl-PO(4)) from acyl-[acyl-carrier-protein] (acyl-ACP). This enzyme utilizes acyl-ACP as fatty acyl donor, but not acyl-CoA. The sequence is that of Phosphate acyltransferase from Oleidesulfovibrio alaskensis (strain ATCC BAA-1058 / DSM 17464 / G20) (Desulfovibrio alaskensis).